The following is a 193-amino-acid chain: Corrinoid adenosyltransferase (193 aa).

Residues 10–18 (TRTGDDGTT), Lys28, 137–142 (RRAERS), and Asn163 contribute to the ATP site.

This sequence belongs to the Cob(I)alamin adenosyltransferase family.

It localises to the cytoplasm. The enzyme catalyses 2 cob(II)yrinate a,c diamide + reduced [electron-transfer flavoprotein] + 2 ATP = 2 adenosylcob(III)yrinate a,c-diamide + 2 triphosphate + oxidized [electron-transfer flavoprotein] + 3 H(+). The catalysed reaction is 2 cob(II)alamin + reduced [electron-transfer flavoprotein] + 2 ATP = 2 adenosylcob(III)alamin + 2 triphosphate + oxidized [electron-transfer flavoprotein] + 3 H(+). It functions in the pathway cofactor biosynthesis; adenosylcobalamin biosynthesis; adenosylcobalamin from cob(II)yrinate a,c-diamide: step 2/7. This chain is Corrinoid adenosyltransferase, found in Mycobacterium bovis (strain ATCC BAA-935 / AF2122/97).